A 108-amino-acid polypeptide reads, in one-letter code: MAPRVTPLLAFSLLVLWTFPAPTLGGANDAEDCCLSVTQRPIPGNIVKAFRYLLNEDGCRVPAVVFTTLRGYQLCAPPDQPWVDRIIRRLKKSSAKNKGNSTRRSPVS.

The signal sequence occupies residues 1–25; that stretch reads MAPRVTPLLAFSLLVLWTFPAPTLG. Disulfide bonds link cysteine 33–cysteine 59 and cysteine 34–cysteine 75. Asparagine 100 is a glycosylation site (N-linked (GlcNAc...) asparagine).

This sequence belongs to the intercrine beta (chemokine CC) family. Interacts with TNFAIP6 (via Link domain). Highly expressed by dendritic cells in mesenteric and peripheral lymph nodes. Significant expression in spleen (T cell zone or periarteriolar lymphatic sheath) and Peyer patches. Low expression in thymus.

The protein localises to the secreted. In terms of biological role, strongly chemotactic for naive (L-selectinhi) CD4 T-cells and for CD8 T-cells and weakly attractive for resting B-cells and memory (L-selectinlo) CD4 T-cells. May play a role in promoting encounters between recirculating T-cells and dendritic cells and in the migration of activated B-cells into the T-zone of secondary lymphoid tissues. Binds to chemokine receptor CCR7. Binds to atypical chemokine receptor ACKR4 and mediates the recruitment of beta-arrestin (ARRB1/2) to ACKR4. The protein is C-C motif chemokine 19 (Ccl19) of Mus musculus (Mouse).